Here is a 124-residue protein sequence, read N- to C-terminus: Glycine cleavage system H protein (124 aa).

Positions Thr-24–Lys-106 constitute a Lipoyl-binding domain. Lys-65 is modified (N6-lipoyllysine).

The protein belongs to the GcvH family. As to quaternary structure, the glycine cleavage system is composed of four proteins: P, T, L and H. It depends on (R)-lipoate as a cofactor.

In terms of biological role, the glycine cleavage system catalyzes the degradation of glycine. The H protein shuttles the methylamine group of glycine from the P protein to the T protein. The protein is Glycine cleavage system H protein of Ruthia magnifica subsp. Calyptogena magnifica.